The chain runs to 102 residues: Small ribosomal subunit protein bS18c (102 aa).

Belongs to the bacterial ribosomal protein bS18 family. As to quaternary structure, part of the 30S ribosomal subunit.

Its subcellular location is the plastid. It is found in the chloroplast. This chain is Small ribosomal subunit protein bS18c, found in Phaseolus vulgaris (Kidney bean).